The sequence spans 344 residues: GDSL esterase/lipase At5g03590 (344 aa).

An N-terminal signal peptide occupies residues 1 to 19 (MHYLMKLFFSLSLFFGING). Serine 41 acts as the Nucleophile in catalysis. N-linked (GlcNAc...) asparagine glycosylation is found at asparagine 126, asparagine 227, and asparagine 238. The active site involves aspartate 318.

It belongs to the 'GDSL' lipolytic enzyme family.

It localises to the secreted. In Arabidopsis thaliana (Mouse-ear cress), this protein is GDSL esterase/lipase At5g03590.